The following is a 337-amino-acid chain: Phenylalanine--tRNA ligase alpha subunit (337 aa).

Residue glutamate 252 participates in Mg(2+) binding.

It belongs to the class-II aminoacyl-tRNA synthetase family. Phe-tRNA synthetase alpha subunit type 1 subfamily. As to quaternary structure, tetramer of two alpha and two beta subunits. Mg(2+) is required as a cofactor.

It is found in the cytoplasm. The enzyme catalyses tRNA(Phe) + L-phenylalanine + ATP = L-phenylalanyl-tRNA(Phe) + AMP + diphosphate + H(+). The chain is Phenylalanine--tRNA ligase alpha subunit from Cellvibrio japonicus (strain Ueda107) (Pseudomonas fluorescens subsp. cellulosa).